The following is a 930-amino-acid chain: Progesterone receptor (930 aa).

A compositionally biased stretch (basic and acidic residues) spans 1-11; sequence MTELKAKEPRA. 2 disordered regions span residues 1–133 and 148–260; these read MTEL…ASPA and LPED…SGAA. An AF3; mediates transcriptional activation region spans residues 1–165; sequence MTELKAKEPR…PATKGVLAPL (165 aa). Positions 1–565 are modulating, Pro-Rich; sequence MTELKAKEPR…PQYSFESLPQ (565 aa). Lys-7 participates in a covalent cross-link: Glycyl lysine isopeptide (Lys-Gly) (interchain with G-Cter in SUMO). Position 20 is a phosphoserine (Ser-20). Over residues 38-49 the composition is skewed to polar residues; that stretch reads QGSQTSEASSVV. An LXXL motif 1 motif is present at residues 56–60; sequence LDGLL. Ser-82 is subject to Phosphoserine. An LXXL motif 2 motif is present at residues 116-120; that stretch reads LDTLL. The residue at position 131 (Ser-131) is a Phosphoserine. Positions 166-304 are mediates transcriptional transrepression; it reads MSRPEDKAGD…LATSVVDFIH (139 aa). Positions 184–188 match the Nuclear localization signal motif; it reads KVLPR. Positions 187-204 are enriched in low complexity; that stretch reads PRGLSPSRQLLLPSSGSP. Phosphoserine occurs at positions 191 and 212. Residue Ser-293 is modified to Phosphoserine; by MAPK1. A disordered region spans residues 334 to 356; sequence AASPFVPQRGSPSASSTPVAGGD. Ser-344 carries the post-translational modification Phosphoserine; by MAPK. A Glycyl lysine isopeptide (Lys-Gly) (interchain with G-Cter in SUMO); alternate cross-link involves residue Lys-387. Residue Lys-387 forms a Glycyl lysine isopeptide (Lys-Gly) (interchain with G-Cter in ubiquitin); alternate linkage. Ser-399 bears the Phosphoserine; by CDK2 mark. The segment at 415–454 is disordered; sequence DFQLAAPPPPSLPPRVPSSRPGEAAVAASPGSASVSSSSS. The span at 420-430 shows a compositional bias: pro residues; sequence APPPPSLPPRV. Residues 431–454 are compositionally biased toward low complexity; sequence PSSRPGEAAVAASPGSASVSSSSS. The segment at 457–547 is AF1; mediates transcriptional activation; the sequence is STLECILYKA…VYTPYLNYLR (91 aa). Lys-532 participates in a covalent cross-link: Glycyl lysine isopeptide (Lys-Gly) (interchain with G-Cter in SUMO). The segment at residues 566–640 is a DNA-binding region (nuclear receptor); it reads KICLICGDEA…AGMVLGGRKF (75 aa). NR C4-type zinc fingers lie at residues 568 to 588 and 604 to 628; these read CLICGDEASGCHYGVLTCGSC and CAGRNDCIVDKIRRKNCPACRLRKC. At Ser-673 the chain carries Phosphoserine. An NR LBD domain is found at 676 to 910; it reads QEIQLIPPLI…EFPEMMSEVI (235 aa). An AF2; mediates transcriptional activation region spans residues 684–930; sequence LINLLMSIEP…MVKPLLFHKK (247 aa). A progesterone-binding site is contributed by Arg-763.

It belongs to the nuclear hormone receptor family. NR3 subfamily. In terms of assembly, interacts with SMARD1 and UNC45A. Interacts with CUEDC2; the interaction promotes ubiquitination, decreases sumoylation, and represses transcriptional activity. Interacts with PIAS3; the interaction promotes sumoylation of PR in a hormone-dependent manner, inhibits DNA-binding, and alters nuclear export. Interacts with SP1; the interaction requires ligand-induced phosphorylation on Ser-344 by ERK1/2-MAPK. Interacts with PRMT2. Interacts with NCOA2 and NCOA1. Interacts with KLF9. Interacts with GTF2B. Post-translationally, phosphorylated on multiple serine sites. Several of these sites are hormone-dependent. Phosphorylation on Ser-293 is highly hormone-dependent and modulates ubiquitination and sumoylation on Lys-387. Phosphorylation on Ser-102 and Ser-344 also requires induction by hormone. Basal phosphorylation on Ser-82, Ser-191 and Ser-399 is increased in response to progesterone and can be phosphorylated in vitro by the CDK2-A1 complex. Increased levels of phosphorylation on Ser-399 also in the presence of EGF, heregulin, IGF, PMA and FBS. Phosphorylation at this site by CDK2 is ligand-independent, and increases nuclear translocation and transcriptional activity. Phosphorylation at Ser-293, but not at Ser-191, is impaired during the G(2)/M phase of the cell cycle. Phosphorylation on Ser-344 by ERK1/2 MAPK is required for interaction with SP1. In terms of processing, sumoylation is hormone-dependent and represses transcriptional activity. Sumoylation on all three sites is enhanced by PIAS3. Desumoylated by SENP1. Sumoylation on Lys-387, the main site of sumoylation, is repressed by ubiquitination on the same site, and modulated by phosphorylation at Ser-293. Ubiquitination is hormone-dependent and represses sumoylation on the same site. Promoted by MAPK-mediated phosphorylation on Ser-293. Ubiquitinated by UBR5, leading to its degradation: UBR5 specifically recognizes and binds ligand-bound PGR when it is not associated with coactivators (NCOAs). In presence of NCOAs, the UBR5-degron is not accessible, preventing its ubiquitination and degradation. Post-translationally, palmitoylated by ZDHHC7 and ZDHHC21. Palmitoylation is required for plasma membrane targeting and for rapid intracellular signaling via ERK and AKT kinases and cAMP generation.

It is found in the nucleus. Its subcellular location is the cytoplasm. In terms of biological role, the steroid hormones and their receptors are involved in the regulation of eukaryotic gene expression and affect cellular proliferation and differentiation in target tissues. Transcriptional activator of several progesteron-dependent promoters in a variety of cell types. Involved in activation of SRC-dependent MAPK signaling on hormone stimulation. This Oryctolagus cuniculus (Rabbit) protein is Progesterone receptor (PGR).